The chain runs to 101 residues: Precursor of CEP6 (101 aa).

A signal peptide spans 1–26; that stretch reads MKLSVYIILSILFISTVFYEIQFTEA. A propeptide spanning residues 27 to 48 is cleaved from the precursor; sequence RQLRKTDDQDHDDHHFTVGYTD. The span at 29–42 shows a compositional bias: basic and acidic residues; that stretch reads LRKTDDQDHDDHHF. The disordered stretch occupies residues 29–101; it reads LRKTDDQDHD…HAVKNNEPNA (73 aa). 3 positions are modified to hydroxyproline: Pro52, Pro55, and Pro59. Residues 64 to 77 constitute a propeptide that is removed on maturation; sequence KMKENEENAGGYKD. Residues 64 to 79 show a composition bias toward basic and acidic residues; the sequence is KMKENEENAGGYKDDF. 3 positions are modified to hydroxyproline: Pro81, Pro84, and Pro88. A propeptide spanning residues 93–101 is cleaved from the precursor; the sequence is AVKNNEPNA.

The protein belongs to the C-terminally encoded plant signaling peptide (CEP) family. Interacts with CEP receptors (e.g. CEPR1 and CEPR2). Post-translationally, the mature small signaling peptide is generated by proteolytic processing of the longer precursor. In terms of tissue distribution, expressed in lateral root primordia and in lateral roots excluding the meristem region. Also present in the aerial tissues, such as leaf petioles and the shoot apex region.

It is found in the secreted. It localises to the extracellular space. Its subcellular location is the apoplast. In terms of biological role, extracellular signaling peptide that represses primary root growth rate. Modulates leaf morphology. Regulates systemic nitrogen (N)-demand signaling. Mediates up-regulation of genes involved in N uptake and assimilation pathways. The protein is Precursor of CEP6 of Arabidopsis thaliana (Mouse-ear cress).